The chain runs to 302 residues: Light-independent protochlorophyllide reductase iron-sulfur ATP-binding protein (302 aa).

Residues Gly46 to Thr51 and Lys75 each bind ATP. Ser50 lines the Mg(2+) pocket. Residues Cys131 and Cys165 each contribute to the [4Fe-4S] cluster site. Asn216–Arg217 lines the ATP pocket.

This sequence belongs to the NifH/BchL/ChlL family. Homodimer. Protochlorophyllide reductase is composed of three subunits; BchL, BchN and BchB. The cofactor is [4Fe-4S] cluster.

It carries out the reaction chlorophyllide a + oxidized 2[4Fe-4S]-[ferredoxin] + 2 ADP + 2 phosphate = protochlorophyllide a + reduced 2[4Fe-4S]-[ferredoxin] + 2 ATP + 2 H2O. It functions in the pathway porphyrin-containing compound metabolism; bacteriochlorophyll biosynthesis (light-independent). Its function is as follows. Component of the dark-operative protochlorophyllide reductase (DPOR) that uses Mg-ATP and reduced ferredoxin to reduce ring D of protochlorophyllide (Pchlide) to form chlorophyllide a (Chlide). This reaction is light-independent. The L component serves as a unique electron donor to the NB-component of the complex, and binds Mg-ATP. In Methylocella silvestris (strain DSM 15510 / CIP 108128 / LMG 27833 / NCIMB 13906 / BL2), this protein is Light-independent protochlorophyllide reductase iron-sulfur ATP-binding protein.